The primary structure comprises 294 residues: Glycine-rich protein 2 (294 aa).

Residues 1–20 (MKMWFRLATFVTLIIEFAHC) form the signal peptide. A compositionally biased stretch (low complexity) spans 205-221 (TGSQTGAAANGTSAGAA). The segment at 205–225 (TGSQTGAAANGTSAGAAVRGG) is disordered.

Nacreous layer of shell (at protein level). Expressed primarily in the mantle with highest level in the mantle pallium and lower level in the mantle edge.

It is found in the secreted. This is Glycine-rich protein 2 from Pinctada maxima (Silver-lipped pearl oyster).